Reading from the N-terminus, the 468-residue chain is Protein CA_C1420 (468 aa).

The tract at residues 1–289 (MSLNGFYLLP…LKELERIRKD (289 aa)) is unknown. One can recognise an AMMECR1 domain in the interval 296 to 468 (QEKDPYVKLA…KFMVTRHKES (173 aa)).

This chain is Protein CA_C1420, found in Clostridium acetobutylicum (strain ATCC 824 / DSM 792 / JCM 1419 / IAM 19013 / LMG 5710 / NBRC 13948 / NRRL B-527 / VKM B-1787 / 2291 / W).